Reading from the N-terminus, the 248-residue chain is Probable transcriptional regulatory protein FTN_1028 (248 aa).

This sequence belongs to the TACO1 family.

The protein localises to the cytoplasm. The protein is Probable transcriptional regulatory protein FTN_1028 of Francisella tularensis subsp. novicida (strain U112).